We begin with the raw amino-acid sequence, 199 residues long: Guanylyl cyclase-activating protein 1 (199 aa).

Residue glycine 2 is the site of N-myristoyl glycine attachment. A Deamidated asparagine modification is found at asparagine 3. EF-hand domains are found at residues 13-48 (SATE…KNLS), 50-85 (SANK…VLKG), 86-121 (KVDQ…IRAI), and 129-164 (TAEE…DEVL). Residues aspartate 63, asparagine 65, aspartate 67, tyrosine 69, glutamate 74, aspartate 99, aspartate 101, asparagine 103, cysteine 105, glutamate 110, aspartate 142, asparagine 144, aspartate 146, glutamate 148, and glutamate 153 each contribute to the Ca(2+) site.

As to expression, retina, in rod and cone outer segments, and pineal gland.

Functionally, stimulates retinal guanylyl cyclase when free calcium ions concentration is low and inhibits guanylyl cyclase when free calcium ions concentration is elevated. This Ca(2+)-sensitive regulation of retinal guanylyl cyclase is a key event in recovery of the dark state of rod photoreceptors following light exposure. The polypeptide is Guanylyl cyclase-activating protein 1 (GUCA1A) (Gallus gallus (Chicken)).